The chain runs to 176 residues: MFHFLALTPLAHSEGFGLNTNILETNILNLAAVFALLAYVGTDFVSSLLKTRKESILKSLRDADERYQDAVNQLKQALQELETARTNAAEIRRQSEINAEAIRQRLELLTQEEMARLEEAKETIIKLEEEKAVAEVCTKVISMALVRAEKKIISSMDEAMHRRVMDMYLNLLREVY.

A helical membrane pass occupies residues 27 to 49 (ILNLAAVFALLAYVGTDFVSSLL).

The protein belongs to the ATPase B chain family. In terms of assembly, F-type ATPases have 2 components, F(1) - the catalytic core - and F(0) - the membrane proton channel. F(1) has five subunits: alpha(3), beta(3), gamma(1), delta(1), epsilon(1). F(0) has four main subunits: a(1), b(1), b'(1) and c(10-14). The alpha and beta chains form an alternating ring which encloses part of the gamma chain. F(1) is attached to F(0) by a central stalk formed by the gamma and epsilon chains, while a peripheral stalk is formed by the delta, b and b' chains.

The protein localises to the plastid. It is found in the chloroplast thylakoid membrane. Functionally, f(1)F(0) ATP synthase produces ATP from ADP in the presence of a proton or sodium gradient. F-type ATPases consist of two structural domains, F(1) containing the extramembraneous catalytic core and F(0) containing the membrane proton channel, linked together by a central stalk and a peripheral stalk. During catalysis, ATP synthesis in the catalytic domain of F(1) is coupled via a rotary mechanism of the central stalk subunits to proton translocation. In terms of biological role, component of the F(0) channel, it forms part of the peripheral stalk, linking F(1) to F(0). In Nephroselmis olivacea (Green alga), this protein is ATP synthase subunit b, chloroplastic.